The following is an 830-amino-acid chain: Protein translocase subunit SecA (830 aa).

ATP contacts are provided by residues glutamine 86, 104–108 (GEGKT), and aspartate 491. Residues cysteine 813, cysteine 815, cysteine 824, and cysteine 825 each coordinate Zn(2+).

Belongs to the SecA family. In terms of assembly, monomer and homodimer. Part of the essential Sec protein translocation apparatus which comprises SecA, SecYEG and auxiliary proteins SecDF. Other proteins may also be involved. It depends on Zn(2+) as a cofactor.

The protein resides in the cell membrane. The protein localises to the cytoplasm. The catalysed reaction is ATP + H2O + cellular proteinSide 1 = ADP + phosphate + cellular proteinSide 2.. Functionally, part of the Sec protein translocase complex. Interacts with the SecYEG preprotein conducting channel. Has a central role in coupling the hydrolysis of ATP to the transfer of proteins into and across the cell membrane, serving as an ATP-driven molecular motor driving the stepwise translocation of polypeptide chains across the membrane. This is Protein translocase subunit SecA from Syntrophomonas wolfei subsp. wolfei (strain DSM 2245B / Goettingen).